We begin with the raw amino-acid sequence, 586 residues long: Arginine--tRNA ligase (586 aa).

The short motif at 131-141 is the 'HIGH' region element; sequence ANPTGPMHVGH.

This sequence belongs to the class-I aminoacyl-tRNA synthetase family. Monomer.

It is found in the cytoplasm. The catalysed reaction is tRNA(Arg) + L-arginine + ATP = L-arginyl-tRNA(Arg) + AMP + diphosphate. The chain is Arginine--tRNA ligase from Xanthobacter autotrophicus (strain ATCC BAA-1158 / Py2).